The following is a 667-amino-acid chain: Zeaxanthin epoxidase, chloroplastic (667 aa).

A chloroplast-targeting transit peptide spans 1–59 (MGSTPFCYSINPSPSKLDFTRTHVFSPVSKQFYLDLSSFSGKPGGVSGFRSRRALLGVK). FAD contacts are provided by residues 82–110 (RVLV…LVFE) and 360–373 (GFTW…LLGD). In terms of domain architecture, FHA spans 558–612 (CIVGSEPDQDFPGMRIVIPSSQVSKMHARVIYKDGAFFLMDLRSEHGTYVTDNEG).

It depends on FAD as a cofactor. As to expression, expressed in leaves, stems and flowers, and at lower levels in roots and siliques.

Its subcellular location is the plastid. It localises to the chloroplast. The catalysed reaction is all-trans-zeaxanthin + 4 reduced [2Fe-2S]-[ferredoxin] + 2 O2 + 4 H(+) = all-trans-violaxanthin + 4 oxidized [2Fe-2S]-[ferredoxin] + 2 H2O. It participates in plant hormone biosynthesis; abscisate biosynthesis. Its function is as follows. Zeaxanthin epoxidase that plays an important role in the xanthophyll cycle and abscisic acid (ABA) biosynthesis. Converts zeaxanthin into antheraxanthin and subsequently violaxanthin. Required for resistance to osmotic and drought stresses, ABA-dependent stomatal closure, seed development and dormancy, modulation of defense gene expression and disease resistance and non-photochemical quencing (NPQ). Through its role in ABA biosynthesis, regulates the expression of stress-responsive genes such as RD29A during osmotic stress and is required for normal plant growth during vegetative development. Is required for late skotomorphogenic growth through its role in the xanthophyll carotenoids neoxanthin, violaxanthin and antheraxanthin biosynthesis. Required for beta-aminobutyric acid (BABA)-induced priming in disease resistance, tolerance to salt and drought stresses and sterility. Participates in NPQ by regulating the level of zeaxanthin in photosynthetic energy conversion. NPQ is a process that maintains the balance between dissipation and utilization of light energy to minimize the generation of oxidizing molecules and the molecular damages they can generate. This Arabidopsis thaliana (Mouse-ear cress) protein is Zeaxanthin epoxidase, chloroplastic (ZEP).